Reading from the N-terminus, the 244-residue chain is Probable transcriptional regulatory protein BT0025 (244 aa).

This sequence belongs to the TACO1 family.

The protein resides in the cytoplasm. This is Probable transcriptional regulatory protein BT0025 from Borrelia turicatae (strain 91E135).